Reading from the N-terminus, the 2135-residue chain is Nonribosomal peptide synthetase gliP (2135 aa).

The interval 34-424 (TYTELDVASS…LPADVEEPLR (391 aa)) is adenylation 1. A Carrier 1 domain is found at 519 to 594 (TEREQVIAEC…GILPYARDLA (76 aa)). Residue Ser555 is modified to O-(pantetheine 4'-phosphoryl)serine. Residues 663–913 (AEHICNAWRQ…MATLPLVCRI (251 aa)) form a condensation 1 region. The tract at residues 1078–1458 (YRELDQKSNA…YQEEPRLTQA (381 aa)) is adenylation 2. Residues 1544 to 1622 (ASIADGIATL…EQVELVRRKR (79 aa)) form the Carrier 2 domain. Ser1582 bears the O-(pantetheine 4'-phosphoryl)serine mark. The segment at 1642–1905 (SPLERQTWFQ…FLDRLPLRFK (264 aa)) is condensation 2. The Carrier 3 domain occupies 2061-2134 (RRLVGILQRE…DLAQRLYRQV (74 aa)). Ser2095 is subject to O-(pantetheine 4'-phosphoryl)serine.

The protein belongs to the NRP synthetase family.

It functions in the pathway mycotoxin biosynthesis. Functionally, nonribosomal peptide synthetase; part of the gene cluster that mediates the biosynthesis of gliotoxin, a member of the epipolythiodioxopiperazine (ETP) class of toxins characterized by a disulfide-bridged cyclic dipeptide. The first step in gliotoxin biosynthesis is the condensation of serine and phenylalanine to form the cyclo-L-phenylalanyl-L-serine diketopiperazine (DKP) by the NRPS gliP. GliP is also able to produce the DKP cyclo-L-tryptophanyl-L-serine, suggesting that the substrate specificity of the first adenylation (A) domain in gliP is sufficiently relaxed to accommodate both L-Phe and L-Trp. The cytochrome P450 monooxygenase gliC has been shown to catalyze the subsequent hydroxylation of the alpha-carbon of L-Phe in cyclo-L-phenylalanyl-L-serine whereas the second cytochrome P450 enzyme, gliF, is presumably involved in the modification of the DKP side chain. The glutathione S-transferase (GST) gliG then forms a bis-glutathionylated biosynthetic intermediate which is responsible for the sulfurization of gliotoxin. This bis-glutathionylated intermediate is subsequently processed by the gamma-glutamyl cyclotransferase gliK to remove both gamma-glutamyl moieties. Subsequent processing via gliI yields a biosynthetic intermediate, which is N-methylated via the N-methyltransferase gliN, before the gliotoxin oxidoreductase gliT-mediated disulfide bridge closure. GliN-mediated amide methylation confers stability to ETP, damping the spontaneous formation of tri- and tetrasulfides. Intracellular dithiol gliotoxin oxidized by gliT is subsequently effluxed by gliA. Gliotoxin contributes to pathogenesis during invasive aspergillosis. In macrophages and neutrophils, gliotoxin showed inhibition of various different cell functions including cytokine production, antigen presentation, phagocytosis, and production of reactive oxygen species. In Aspergillus fumigatus (strain ATCC MYA-4609 / CBS 101355 / FGSC A1100 / Af293) (Neosartorya fumigata), this protein is Nonribosomal peptide synthetase gliP.